Consider the following 360-residue polypeptide: 3-dehydroquinate synthase (360 aa).

NAD(+)-binding positions include 70 to 75 (DGEKYK), 104 to 108 (GVIGD), 128 to 129 (TT), lysine 141, and lysine 150. Glutamate 183, histidine 246, and histidine 263 together coordinate Zn(2+).

Belongs to the sugar phosphate cyclases superfamily. Dehydroquinate synthase family. The cofactor is Co(2+). Zn(2+) is required as a cofactor. NAD(+) serves as cofactor.

The protein localises to the cytoplasm. The catalysed reaction is 7-phospho-2-dehydro-3-deoxy-D-arabino-heptonate = 3-dehydroquinate + phosphate. The protein operates within metabolic intermediate biosynthesis; chorismate biosynthesis; chorismate from D-erythrose 4-phosphate and phosphoenolpyruvate: step 2/7. In terms of biological role, catalyzes the conversion of 3-deoxy-D-arabino-heptulosonate 7-phosphate (DAHP) to dehydroquinate (DHQ). The sequence is that of 3-dehydroquinate synthase from Acinetobacter baumannii (strain SDF).